The primary structure comprises 1038 residues: Pro-apoptotic serine protease nma111 (1038 aa).

The segment at 1–47 is disordered; sequence MDLNGDSNAKRKRSSISAAAERPAKHLRPENSSLTPGDTTPANGTVY. A compositionally biased stretch (polar residues) spans 30 to 43; that stretch reads ENSSLTPGDTTPAN. A serine protease region spans residues 82–275; the sequence is VVSIHFCQTC…DRPLRALNCI (194 aa). Catalysis depends on charge relay system residues His120, Asp151, and Ser233. 2 PDZ domains span residues 289-374 and 877-958; these read QWIL…LLVQ and VFCG…VTFD.

The protein belongs to the peptidase S1C family.

It is found in the nucleus. Nuclear serine protease which mediates apoptosis. The polypeptide is Pro-apoptotic serine protease nma111 (nma111) (Aspergillus terreus (strain NIH 2624 / FGSC A1156)).